The primary structure comprises 238 residues: Ribonuclease PH (238 aa).

Residues R86 and 124 to 126 contribute to the phosphate site; that span reads GTR.

The protein belongs to the RNase PH family. As to quaternary structure, homohexameric ring arranged as a trimer of dimers.

The catalysed reaction is tRNA(n+1) + phosphate = tRNA(n) + a ribonucleoside 5'-diphosphate. In terms of biological role, phosphorolytic 3'-5' exoribonuclease that plays an important role in tRNA 3'-end maturation. Removes nucleotide residues following the 3'-CCA terminus of tRNAs; can also add nucleotides to the ends of RNA molecules by using nucleoside diphosphates as substrates, but this may not be physiologically important. Probably plays a role in initiation of 16S rRNA degradation (leading to ribosome degradation) during starvation. The sequence is that of Ribonuclease PH from Histophilus somni (strain 129Pt) (Haemophilus somnus).